Here is a 1022-residue protein sequence, read N- to C-terminus: Antigenic heat-stable 120 kDa protein (1022 aa).

Disordered stretches follow at residues 1–41 and 355–403; these read MSKD…QTTT and GQSK…PQSQ. Residues 19 to 34 show a composition bias toward basic and acidic residues; the sequence is EYTEEQKQTLEQEQKE. 2 stretches are compositionally biased toward polar residues: residues 355 to 380 and 387 to 403; these read GQSK…QYKQ and PTNQ…PQSQ.

It is found in the cytoplasm. In Rickettsia conorii (strain ATCC VR-613 / Malish 7), this protein is Antigenic heat-stable 120 kDa protein (sca4).